A 564-amino-acid polypeptide reads, in one-letter code: Nucleolus and neural progenitor protein (564 aa).

The disordered stretch occupies residues 431 to 495 (GSRTSTSEHP…KRRCSGTVQR (65 aa)). A compositionally biased stretch (basic residues) spans 442–459 (RQRRSKYKVLSRQRKPQR). Residues 442–460 (RQRRSKYKVLSRQRKPQRK) are nuclear localization signal. Positions 460–473 (KLQSTLLKETQQVP) are enriched in polar residues.

It belongs to the nepro family.

The protein localises to the nucleus. It localises to the nucleolus. Its function is as follows. May play a role in cortex development as part of the Notch signaling pathway. Downstream of Notch may repress the expression of proneural genes and inhibit neuronal differentiation thereby maintaining neural progenitors. May also play a role in preimplentation embryo development. This is Nucleolus and neural progenitor protein from Mus musculus (Mouse).